A 2059-amino-acid polypeptide reads, in one-letter code: Histone transcription regulator 3 homolog (2059 aa).

TPR repeat units lie at residues 11–44 (PAEAVEEEVDDTKEIQIEEALKLYQNALKLHSQG), 49–86 (AQAAEAYDALLSSEIFKYPESLSDYKRAATELELTETS), and 139–172 (QESDSTPGLSAEIAERASTALTSFAEALERDDTD). 2 disordered regions span residues 337–378 (ATAT…MDFQ) and 415–476 (TSQS…AEAS). Composition is skewed to polar residues over residues 340–351 (TKETQVQDQSPR) and 415–428 (TSQSPELANQQETP). 2 TPR repeats span residues 1029-1064 (YEDSVRVGQLSGSDVRGALAKSLESFRDKLREMHVR) and 1271-1304 (TKFRSQKRLNPVPTTDLDEAITWFRQDLEHNTQR). Disordered regions lie at residues 1779 to 1896 (DGAA…DDEK) and 1908 to 2059 (FPNL…AMDI). Positions 1807 to 1816 (ARRDIQKRAE) are enriched in basic and acidic residues. Residues 1825-1836 (PRAPIAKAPAAA) are compositionally biased toward low complexity. A compositionally biased stretch (polar residues) spans 1850-1860 (APEQTKDTATS). Positions 1883–1894 (ADDESELSEIDD) are enriched in acidic residues. The span at 1925–1937 (AAASADGDGANEG) shows a compositional bias: low complexity. A compositionally biased stretch (acidic residues) spans 1939 to 2036 (GDGEEDADRE…ANEMDVDDGG (98 aa)).

It belongs to the HIR3 family.

The protein localises to the nucleus. Functionally, has a role in a nucleosome assembly pathway that is required for the integrity of heterochromatin and proper chromosome segregation. This chain is Histone transcription regulator 3 homolog (hir3), found in Aspergillus oryzae (strain ATCC 42149 / RIB 40) (Yellow koji mold).